We begin with the raw amino-acid sequence, 201 residues long: Protein OPI10 homolog (201 aa).

Belongs to the OPI10 family.

The sequence is that of Protein OPI10 homolog from Anopheles gambiae (African malaria mosquito).